A 416-amino-acid polypeptide reads, in one-letter code: Histidine--tRNA ligase (416 aa).

The protein belongs to the class-II aminoacyl-tRNA synthetase family. In terms of assembly, homodimer.

It is found in the cytoplasm. It carries out the reaction tRNA(His) + L-histidine + ATP = L-histidyl-tRNA(His) + AMP + diphosphate + H(+). In Clostridium kluyveri (strain NBRC 12016), this protein is Histidine--tRNA ligase.